Consider the following 88-residue polypeptide: Augerpeptide Hhe9a (88 aa).

A signal peptide spans 1–21 (MMTKTGLVLLFAFLLVFPVSS). The propeptide occupies 22 to 49 (LPMDAEAGHARLEMDKRDAGNEAWTRLL). 3 disulfide bridges follow: C56–C71, C61–C73, and C67–C86.

As to expression, expressed by the venom duct.

Its subcellular location is the secreted. The sequence is that of Augerpeptide Hhe9a from Hastula hectica (Sea snail).